A 312-amino-acid chain; its full sequence is Ribosomal protein L11 methyltransferase (312 aa).

S-adenosyl-L-methionine contacts are provided by threonine 163, glycine 184, aspartate 206, and asparagine 248.

The protein belongs to the methyltransferase superfamily. PrmA family.

It is found in the cytoplasm. It carries out the reaction L-lysyl-[protein] + 3 S-adenosyl-L-methionine = N(6),N(6),N(6)-trimethyl-L-lysyl-[protein] + 3 S-adenosyl-L-homocysteine + 3 H(+). Functionally, methylates ribosomal protein L11. The sequence is that of Ribosomal protein L11 methyltransferase from Clostridium botulinum (strain 657 / Type Ba4).